Here is an 83-residue protein sequence, read N- to C-terminus: Cell division topological specificity factor (83 aa).

This sequence belongs to the MinE family.

Its function is as follows. Prevents the cell division inhibition by proteins MinC and MinD at internal division sites while permitting inhibition at polar sites. This ensures cell division at the proper site by restricting the formation of a division septum at the midpoint of the long axis of the cell. This Pseudoalteromonas atlantica (strain T6c / ATCC BAA-1087) protein is Cell division topological specificity factor.